A 310-amino-acid chain; its full sequence is Metal ABC transporter substrate-binding lipoprotein ScbA (310 aa).

The N-terminal stretch at 1-19 (MKKCRFLVLLLLAFVGLAA) is a signal peptide. Residue C20 is the site of N-palmitoyl cysteine attachment. C20 is lipidated: S-diacylglycerol cysteine. Positions 68, 140, 206, and 281 each coordinate a divalent metal cation.

Belongs to the bacterial solute-binding protein 9 family.

The protein localises to the cell membrane. Functionally, part of an ATP-binding cassette (ABC) transport system involved in metal import. Binds a metal with high affinity and specificity and delivers it to the membrane permease for translocation into the cytoplasm. Part of an ATP-driven transport system for manganese. Does not exhibit adhesion properties. The protein is Metal ABC transporter substrate-binding lipoprotein ScbA (scbA) of Streptococcus cristatus.